A 940-amino-acid chain; its full sequence is Phosphoenolpyruvate carboxylase (940 aa).

Catalysis depends on residues histidine 138 and lysine 603.

It belongs to the PEPCase type 1 family. Mg(2+) serves as cofactor.

It carries out the reaction oxaloacetate + phosphate = phosphoenolpyruvate + hydrogencarbonate. Forms oxaloacetate, a four-carbon dicarboxylic acid source for the tricarboxylic acid cycle. This is Phosphoenolpyruvate carboxylase from Streptococcus thermophilus (strain CNRZ 1066).